Here is a 163-residue protein sequence, read N- to C-terminus: Nucleotide-binding protein Tery_2743 (163 aa).

It belongs to the YajQ family.

Its function is as follows. Nucleotide-binding protein. The chain is Nucleotide-binding protein Tery_2743 from Trichodesmium erythraeum (strain IMS101).